The primary structure comprises 49 residues: MGFGYGFGGGYGGGCYGGYAGGYGGGYGSTFVLLVVLFILLIIVGASFF.

Residues 29-49 traverse the membrane as a helical segment; sequence STFVLLVVLFILLIIVGASFF.

This sequence belongs to the SscA family.

It localises to the membrane. In Bacillus subtilis (strain 168), this protein is Sporulation protein YjcZ (yjcZ).